The chain runs to 117 residues: Large ribosomal subunit protein bL17 (117 aa).

The protein belongs to the bacterial ribosomal protein bL17 family. In terms of assembly, part of the 50S ribosomal subunit. Contacts protein L32.

This chain is Large ribosomal subunit protein bL17, found in Campylobacter jejuni subsp. doylei (strain ATCC BAA-1458 / RM4099 / 269.97).